The primary structure comprises 199 residues: VAMP-like protein YKT61 (199 aa).

The region spanning 7 to 133 is the Longin domain; that stretch reads LVLKCAPEAS…LTEALNKFQD (127 aa). The v-SNARE coiled-coil homology domain occupies 139-199; it reads KLLKIQRELD…KKTNSCCTIL (61 aa). Cys195 carries S-palmitoyl cysteine lipidation. A Cysteine methyl ester modification is found at Cys196. A lipid anchor (S-geranylgeranyl cysteine) is attached at Cys196. Residues 197-199 constitute a propeptide, removed in mature form; sequence TIL.

This sequence belongs to the synaptobrevin family. Interacts with SYP41. Core constituent of the SNARE complex required for membrane fusion at the trans-Golgi network. Expressed ubiquitously in roots, stems, flowers and leaves.

It localises to the cell membrane. Functionally, may be involved in the secretory pathway. Essential for membrane fusion mediated by either SYP41 or SYP61; triggers the fusion of phospholipid vesicles containing SYP41 or SYP61 and VTI12. The chain is VAMP-like protein YKT61 from Arabidopsis thaliana (Mouse-ear cress).